We begin with the raw amino-acid sequence, 85 residues long: Sodium channel neurotoxin MeuNaTxalpha-2 (85 aa).

The N-terminal stretch at 1-19 (MNYLVMISLALLLMTGVES) is a signal peptide. Residues 21–83 (RDAYIANDRN…VPIRIPGECR (63 aa)) form the LCN-type CS-alpha/beta domain. Disulfide bonds link Cys-31–Cys-82, Cys-35–Cys-55, Cys-41–Cys-65, and Cys-45–Cys-67. Arg-83 carries the arginine amide modification.

This sequence belongs to the long (4 C-C) scorpion toxin superfamily. Sodium channel inhibitor family. Alpha subfamily. Expressed by the venom gland.

Its subcellular location is the secreted. Alpha toxins bind voltage-independently at site-3 of sodium channels (Nav) and inhibit the inactivation of the activated channels, thereby blocking neuronal transmission. This toxin inhibits inactivation of Nav1.4/SCN4A (EC(50)=2.23 uM) and drosophila DmNav1 (EC(50)=220 nM). The toxin (1 uM) does not significantly shift the midpoint of activation at the two channels, but induces a significant depolarizing shift in the V(1/2) of inactivation of the channels. In addition, the toxin accelerates the recovery from fast inactivation in Nav1.4/SCN4A and DmNav1. It also shows antimicrobial activity. The protein is Sodium channel neurotoxin MeuNaTxalpha-2 of Mesobuthus eupeus (Lesser Asian scorpion).